A 252-amino-acid polypeptide reads, in one-letter code: Thiazole synthase (252 aa).

Lys-95 acts as the Schiff-base intermediate with DXP in catalysis. Residues Gly-156, 182 to 183 (AG), and 204 to 205 (NT) each bind 1-deoxy-D-xylulose 5-phosphate.

This sequence belongs to the ThiG family. Homotetramer. Forms heterodimers with either ThiH or ThiS.

Its subcellular location is the cytoplasm. It carries out the reaction [ThiS sulfur-carrier protein]-C-terminal-Gly-aminoethanethioate + 2-iminoacetate + 1-deoxy-D-xylulose 5-phosphate = [ThiS sulfur-carrier protein]-C-terminal Gly-Gly + 2-[(2R,5Z)-2-carboxy-4-methylthiazol-5(2H)-ylidene]ethyl phosphate + 2 H2O + H(+). Its pathway is cofactor biosynthesis; thiamine diphosphate biosynthesis. Catalyzes the rearrangement of 1-deoxy-D-xylulose 5-phosphate (DXP) to produce the thiazole phosphate moiety of thiamine. Sulfur is provided by the thiocarboxylate moiety of the carrier protein ThiS. In vitro, sulfur can be provided by H(2)S. The chain is Thiazole synthase from Shewanella sp. (strain ANA-3).